The sequence spans 135 residues: Transcription antitermination protein NusB (135 aa).

The protein belongs to the NusB family.

Its function is as follows. Involved in transcription antitermination. Required for transcription of ribosomal RNA (rRNA) genes. Binds specifically to the boxA antiterminator sequence of the ribosomal RNA (rrn) operons. The chain is Transcription antitermination protein NusB from Wolinella succinogenes (strain ATCC 29543 / DSM 1740 / CCUG 13145 / JCM 31913 / LMG 7466 / NCTC 11488 / FDC 602W) (Vibrio succinogenes).